The chain runs to 186 residues: MSVADVKKNAEQKMQKSIEALKTDLAKIRTGRAHTGLLDHVQVDYYGSMVPISQVANVTLVDARTIGVQPWEKKMVQAVEKAIREADLGLNPATMGDIIRVPTPALTEERRKELTKVVKGEGEDAKVAVRNLRRDANEQLKKLVKDKAISEDDERRGGDEVQKLTDKFVAEIDKLVAEKDKEIMTV.

This sequence belongs to the RRF family.

The protein resides in the cytoplasm. Functionally, responsible for the release of ribosomes from messenger RNA at the termination of protein biosynthesis. May increase the efficiency of translation by recycling ribosomes from one round of translation to another. The polypeptide is Ribosome-recycling factor (Ralstonia pickettii (strain 12J)).